The sequence spans 1013 residues: Sodium/potassium-transporting ATPase subunit alpha-3 (1013 aa).

Positions Met1–Ser10 are enriched in basic and acidic residues. A disordered region spans residues Met1–Asp24. Over Met1–Pro77 the chain is Cytoplasmic. Phosphoserine is present on residues Ser37 and Ser56. The interval Pro72–Pro74 is interaction with phosphoinositide-3 kinase. The helical transmembrane segment at Glu78–Ala98 threads the bilayer. Over Ile99–Tyr121 the chain is Extracellular. The helical transmembrane segment at Leu122–Ala142 threads the bilayer. Residues Lys143 to Ile278 are Cytoplasmic-facing. Phosphoserine is present on residues Ser218 and Ser265. Residues Glu279 to Ile298 form a helical membrane-spanning segment. Residues Leu299–Ala310 lie on the Extracellular side of the membrane. Residues Val311 to Ala328 form a helical membrane-spanning segment. Residues Thr329–Leu762 lie on the Cytoplasmic side of the membrane. Asp366 acts as the 4-aspartylphosphate intermediate in catalysis. Ser442 is subject to Phosphoserine. Tyr548 is subject to Phosphotyrosine. Residues Asp707 and Asp711 each contribute to the Mg(2+) site. A helical membrane pass occupies residues Lys763–Leu782. At Phe783–Leu792 the chain is on the extracellular side. A helical membrane pass occupies residues Gly793–Ala813. Residues Tyr814–Lys833 lie on the Cytoplasmic side of the membrane. Residues Leu834–Phe856 form a helical membrane-spanning segment. Residues Phe857–Cys908 lie on the Extracellular side of the membrane. The chain crosses the membrane as a helical span at residues His909–Lys928. At Thr929–Asn941 the chain is on the cytoplasmic side. Ser933 carries the phosphoserine; by PKA modification. The chain crosses the membrane as a helical span at residues Lys942–Tyr960. Residues Cys961–Pro975 are Extracellular-facing. The helical transmembrane segment at Ser976 to Lys996 threads the bilayer. At Leu997–Tyr1013 the chain is on the cytoplasmic side.

It belongs to the cation transport ATPase (P-type) (TC 3.A.3) family. Type IIC subfamily. As to quaternary structure, the sodium/potassium-transporting ATPase is composed of a catalytic alpha subunit, an auxiliary non-catalytic beta subunit and an additional regulatory subunit. Interacts with regulatory subunit FXYD1.

The protein localises to the cell membrane. The enzyme catalyses K(+)(out) + Na(+)(in) + ATP + H2O = K(+)(in) + Na(+)(out) + ADP + phosphate + H(+). Its function is as follows. This is the catalytic component of the active enzyme, which catalyzes the hydrolysis of ATP coupled with the exchange of sodium and potassium ions across the plasma membrane. This action creates the electrochemical gradient of sodium and potassium ions, providing the energy for active transport of various nutrients. The protein is Sodium/potassium-transporting ATPase subunit alpha-3 (Atp1a3) of Mus musculus (Mouse).